Reading from the N-terminus, the 100-residue chain is Small ribosomal subunit protein uS14c (100 aa).

This sequence belongs to the universal ribosomal protein uS14 family. As to quaternary structure, part of the 30S ribosomal subunit.

It localises to the plastid. The protein resides in the chloroplast. Binds 16S rRNA, required for the assembly of 30S particles. The sequence is that of Small ribosomal subunit protein uS14c from Cucumis sativus (Cucumber).